A 449-amino-acid chain; its full sequence is Trigger factor (449 aa).

The region spanning 173-258 is the PPIase FKBP-type domain; it reads GDRVTVDFVG…LKKVEWPHLP (86 aa).

The protein belongs to the FKBP-type PPIase family. Tig subfamily.

It is found in the cytoplasm. It catalyses the reaction [protein]-peptidylproline (omega=180) = [protein]-peptidylproline (omega=0). In terms of biological role, involved in protein export. Acts as a chaperone by maintaining the newly synthesized protein in an open conformation. Functions as a peptidyl-prolyl cis-trans isomerase. The protein is Trigger factor of Burkholderia mallei (strain NCTC 10229).